Reading from the N-terminus, the 404-residue chain is Triose phosphate/phosphate translocator, chloroplastic (404 aa).

A chloroplast-targeting transit peptide spans 1 to 74; it reads MESRVLSRTT…GPVCSRREKT (74 aa). Residues 75 to 98 are Chloroplast intermembrane-facing; it reads AVQPCRAASGSSGEAKTGFLEKYP. The helical transmembrane segment at 99–119 threads the bilayer; that stretch reads ALVTGSFFFMWYFLNVIFNIL. The Lumenal segment spans residues 120–131; it reads NKKIYNYFPYPY. The helical transmembrane segment at 132 to 152 threads the bilayer; the sequence is FVSVIHLFVGVVYCLASWSVG. Residues 153 to 209 lie on the Chloroplast intermembrane side of the membrane; it reads LPKRAPMDSKLLKLLIPVAVCHAIGHVTSNVSFAAVAVSFTHTIKALEPFFNAAASQ. The helical transmembrane segment at 210–230 threads the bilayer; it reads FVLGQSIPITLWLSLAPVVIG. Residues 231-274 are Lumenal-facing; the sequence is VSMASLTELSFNWLGFISAMISNVSFTYRSLYSKKAMTDMDSTN. The helical transmembrane segment at 275-294 threads the bilayer; the sequence is IYAYISIIALFVCLPPAIIV. Residues 295 to 372 are Chloroplast intermembrane-facing; sequence EGPQLMKHGF…IAFGNKISTQ (78 aa). The chain crosses the membrane as a helical span at residues 373–393; that stretch reads TAIGTSIAIAGVALYSLIKAK. The Lumenal portion of the chain corresponds to 394-404; it reads MEEEKRQMKST.

This sequence belongs to the TPT transporter family. TPT (TC 2.A.7.9) subfamily. Post-translationally, the N-terminus is blocked.

The protein resides in the plastid. It is found in the chloroplast membrane. In terms of biological role, mediates the export of fixed carbons from the chloroplasts into the cytosol in the form of triose phosphates. In Spinacia oleracea (Spinach), this protein is Triose phosphate/phosphate translocator, chloroplastic.